A 235-amino-acid chain; its full sequence is Retron Ec48 transmembrane protein (235 aa).

The next 2 helical transmembrane spans lie at 11-31 and 64-84; these read IVGV…FETI and AFGW…ALMT.

It localises to the cell inner membrane. In terms of biological role, membrane component of antiviral defense system Retron Ec48, composed of a non-coding RNA (ncRNA), a reverse transcriptase (RT) and this membrane protein. Expression of this retron confers protection against bacteriophages lambda, T2, T4, T5 and T7. At multiplicity of infection (MOI) of 0.02 cultures grow normally when infected with lambda without collapsing, at MOI 2 cultures enter growth stasis. At MOI 3 cell membranes are permeabilized within 15 minutes of infection but do not lyse, suggesting the phage are not able to finish a replication cycle. Antiviral defense is suppressed by mutations that knockout the lambda gam expression or phage T7 gp5.9 expression; both viral genes inhibit host RecBCD. The Ec48 retron may sense the integrity of the RecBCD enzyme; when RecBCD is perturbed by viral proteins the Ec48 effector (the membrane protein) is activated, leading to abortive infection and bacterial growth arrest. The chain is Retron Ec48 transmembrane protein from Escherichia coli.